The following is a 516-amino-acid chain: Methionine--tRNA ligase (516 aa).

Residues 13 to 23 (FYPNGKPHIGH) carry the 'HIGH' region motif. Positions 299–303 (KMSKS) match the 'KMSKS' region motif. K302 provides a ligand contact to ATP.

It belongs to the class-I aminoacyl-tRNA synthetase family. MetG type 2B subfamily. As to quaternary structure, monomer.

It is found in the cytoplasm. The catalysed reaction is tRNA(Met) + L-methionine + ATP = L-methionyl-tRNA(Met) + AMP + diphosphate. Its function is as follows. Is required not only for elongation of protein synthesis but also for the initiation of all mRNA translation through initiator tRNA(fMet) aminoacylation. The sequence is that of Methionine--tRNA ligase from Mesorhizobium japonicum (strain LMG 29417 / CECT 9101 / MAFF 303099) (Mesorhizobium loti (strain MAFF 303099)).